A 229-amino-acid polypeptide reads, in one-letter code: Probable ribonuclease H (229 aa).

Positions 42–164 (LQDISLEFDK…ADFLANSAAK (123 aa)) constitute an RNase H type-1 domain. Residues Glu60, Asp87, and Asp156 each coordinate a divalent metal cation.

It belongs to the RNase H family. The cofactor is a divalent metal cation.

It carries out the reaction Endonucleolytic cleavage to 5'-phosphomonoester.. Endonuclease that specifically degrades the RNA of RNA-DNA hybrids. The polypeptide is Probable ribonuclease H (RNH1) (Acanthamoeba polyphaga mimivirus (APMV)).